Consider the following 498-residue polypeptide: Glycerol kinase (498 aa).

Thr14 contacts ADP. Thr14, Thr15, and Ser16 together coordinate ATP. Thr14 contacts sn-glycerol 3-phosphate. Arg18 lines the ADP pocket. The sn-glycerol 3-phosphate site is built by Arg84, Glu85, Tyr136, and Asp245. Residues Arg84, Glu85, Tyr136, Asp245, and Gln246 each contribute to the glycerol site. ADP contacts are provided by Thr267 and Gly310. The ATP site is built by Thr267, Gly310, Gln314, and Gly410. Residues Gly410 and Asn414 each coordinate ADP.

Belongs to the FGGY kinase family.

The catalysed reaction is glycerol + ATP = sn-glycerol 3-phosphate + ADP + H(+). Its pathway is polyol metabolism; glycerol degradation via glycerol kinase pathway; sn-glycerol 3-phosphate from glycerol: step 1/1. Its activity is regulated as follows. Inhibited by fructose 1,6-bisphosphate (FBP). Its function is as follows. Key enzyme in the regulation of glycerol uptake and metabolism. Catalyzes the phosphorylation of glycerol to yield sn-glycerol 3-phosphate. In Rhodospirillum centenum (strain ATCC 51521 / SW), this protein is Glycerol kinase.